A 63-amino-acid chain; its full sequence is Progonadoliberin-1 (63 aa).

Residue glutamine 1 is modified to Pyrrolidone carboxylic acid. Glycine 10 is modified (glycine amide).

Belongs to the GnRH family. Post-translationally, the precursor is cleaved by ACE, which removes the Gly-Lys-Arg peptide at the C-terminus, leading to mature hormone. The mature form of Gonadoliberin-1 is also cleaved and degraded by ACE.

It localises to the secreted. In terms of biological role, stimulates the secretion of gonadotropins; it stimulates the secretion of both luteinizing and follicle-stimulating hormones. The protein is Progonadoliberin-1 (GNRH1) of Mesocricetus auratus (Golden hamster).